The primary structure comprises 292 residues: MAPRAYWKGSLKLSLVTCPVVLYPASTSVEKTRFHLINRETGNRLKQQMIDAETGDLVEGDQKGRGYELSKGQYVEIEPEELEAVQIESNHTIDIDSFVPREEIDQRYLNHPYYIAPDGKAAVDAFAVIRDAMKDQDRVALARIVLTHREHVIAIEPMGKGMLGTTLRFPYELRDEAEFFDDIKAPKITKDMVELAGHILQTKAAHFKPSEFKDQYETALKALVKRKASGKPIKLPEPEERSGNVVSLMDALKQSLGKGDKKAAPAPSRRAPAHRRPAKKAHRSAARQRKAG.

One can recognise a Ku domain in the interval 12–196 (KLSLVTCPVV…KITKDMVELA (185 aa)). The segment at 231-292 (KPIKLPEPEE…RSAARQRKAG (62 aa)) is disordered. A compositionally biased stretch (basic residues) spans 271 to 292 (APAHRRPAKKAHRSAARQRKAG).

This sequence belongs to the prokaryotic Ku family. Homodimer. Interacts with LigD.

With LigD forms a non-homologous end joining (NHEJ) DNA repair enzyme, which repairs dsDNA breaks with reduced fidelity. Binds linear dsDNA with 5'- and 3'- overhangs but not closed circular dsDNA nor ssDNA. Recruits and stimulates the ligase activity of LigD. The chain is Non-homologous end joining protein Ku from Bradyrhizobium sp. (strain ORS 278).